We begin with the raw amino-acid sequence, 357 residues long: MEAAVGDGEGGGGGGGRGKRGRGGGGGEMVEAVWGQTGSTASRIYRVRATGGKDRHSKVYTAKGIRDRRVRLSVATAIQFYDLQDRLGFDQPSKAIEWLINAASPAIDTLPSLDPAAFAAIPHAAADAAPTRRRSQQQQQQLSNKSGCSSTSETSKGSDKEVTVASAPAQAASFTELLIAGVAASSAGGGAIGNGADCVGIAHPGKGGAEGASTYGFSAASSFGDAPPIGMVPAPPFNFSAPGADMAAHYSLAQDQLAAPPPPAGGDYNLNFSMSSGFLGANRGTLQSNSPSNMSGHHHHHHQQQLQRLDGSTISFLLGHAAAAAHPAASEGQITSTAALQLWDGFRHSGMKEKSKN.

Residues 1-29 (MEAAVGDGEGGGGGGGRGKRGRGGGGGEM) form a disordered region. Residues 7-16 (DGEGGGGGGG) are compositionally biased toward gly residues. The TCP domain maps to 52–110 (GKDRHSKVYTAKGIRDRRVRLSVATAIQFYDLQDRLGFDQPSKAIEWLINAASPAIDTL). 2 disordered regions span residues 125 to 162 (AADAAPTRRRSQQQQQQLSNKSGCSSTSETSKGSDKEV) and 281 to 307 (ANRGTLQSNSPSNMSGHHHHHHQQQLQ). 2 stretches are compositionally biased toward polar residues: residues 142 to 155 (LSNKSGCSSTSETS) and 284 to 295 (GTLQSNSPSNMS).

As to quaternary structure, forms homodimers and heterodimers.

The protein localises to the nucleus. Functionally, transcription activator. Binds the promoter core sequence 5'-GGNCC-3'. The polypeptide is Transcription factor PCF6 (PCF6) (Oryza sativa subsp. japonica (Rice)).